Here is a 243-residue protein sequence, read N- to C-terminus: MTNLLINVDHVGTLRNAREETFPDPVHAAARCEQAGADGIVFHLREDRRHITERDVRLLAETVNGKLDFELSTEEEVVSICCDVVPDLATLVPERREEVTTEGGLDVTASRPRLNAVTDRLYDAGVDQVSLFVDPVPAQIEATAAVGANCVELHTGDFAEASTEAARREEAERLAAAADAAHEAGLRVHAGHGLDYNNFSLFRETVPHVAEVSIGFAVMARAILVGMDQAVRDMRATVANAQP.

Residue N7 coordinates 3-amino-2-oxopropyl phosphate. D9–H10 serves as a coordination point for 1-deoxy-D-xylulose 5-phosphate. Position 18 (R18) interacts with 3-amino-2-oxopropyl phosphate. The active-site Proton acceptor is the H43. 2 residues coordinate 1-deoxy-D-xylulose 5-phosphate: R45 and H50. E70 (proton acceptor) is an active-site residue. T100 serves as a coordination point for 1-deoxy-D-xylulose 5-phosphate. H192 acts as the Proton donor in catalysis. Residues G193 and G215–F216 contribute to the 3-amino-2-oxopropyl phosphate site.

It belongs to the PNP synthase family. As to quaternary structure, homooctamer; tetramer of dimers.

It is found in the cytoplasm. The enzyme catalyses 3-amino-2-oxopropyl phosphate + 1-deoxy-D-xylulose 5-phosphate = pyridoxine 5'-phosphate + phosphate + 2 H2O + H(+). It functions in the pathway cofactor biosynthesis; pyridoxine 5'-phosphate biosynthesis; pyridoxine 5'-phosphate from D-erythrose 4-phosphate: step 5/5. Catalyzes the complicated ring closure reaction between the two acyclic compounds 1-deoxy-D-xylulose-5-phosphate (DXP) and 3-amino-2-oxopropyl phosphate (1-amino-acetone-3-phosphate or AAP) to form pyridoxine 5'-phosphate (PNP) and inorganic phosphate. This is Pyridoxine 5'-phosphate synthase from Salinibacter ruber (strain DSM 13855 / M31).